The sequence spans 164 residues: Arginine repressor (164 aa).

This sequence belongs to the ArgR family.

Its subcellular location is the cytoplasm. It functions in the pathway amino-acid biosynthesis; L-arginine biosynthesis [regulation]. In terms of biological role, regulates arginine biosynthesis genes. The chain is Arginine repressor from Mycobacterium avium (strain 104).